A 100-amino-acid chain; its full sequence is High mobility group protein C (100 aa).

Residues 12-80 constitute a DNA-binding region (HMG box); sequence PKRPLSAFFL…KYEKDMQAYE (69 aa). The segment at 81 to 100 is disordered; the sequence is KKYGKPEKQKKIKKNKKGSK. The span at 90-100 shows a compositional bias: basic residues; it reads KKIKKNKKGSK.

It is found in the nucleus. It localises to the chromosome. The polypeptide is High mobility group protein C (Tetrahymena thermophila).